A 71-amino-acid chain; its full sequence is Defensin 1 (71 aa).

The signal sequence occupies residues 1-25 (KTVAGFCIFFLVLFLAQEGVVKTEA). Intrachain disulfides connect cysteine 28-cysteine 71, cysteine 39-cysteine 60, and cysteine 45-cysteine 65.

Belongs to the DEFL family. May form dimers. Post-translationally, not glycosylated. In terms of processing, contains 4 disulfide bonds. Met-61 and Met-63 might be oxidized in some molecules.

In terms of biological role, probably has antifungal activity. The protein is Defensin 1 of Arachis hypogaea (Peanut).